A 149-amino-acid chain; its full sequence is Transcriptional repressor NrdR (149 aa).

The segment at 3–34 (CPFCSATDTKVIDSRLVSDGHQVRRRRQCLAC) is a zinc-finger region. The 91-residue stretch at 49-139 (PKVIKSNGNR…VYRSFEDIKE (91 aa)) folds into the ATP-cone domain.

This sequence belongs to the NrdR family. Zn(2+) serves as cofactor.

Functionally, negatively regulates transcription of bacterial ribonucleotide reductase nrd genes and operons by binding to NrdR-boxes. The polypeptide is Transcriptional repressor NrdR (Aliivibrio salmonicida (strain LFI1238) (Vibrio salmonicida (strain LFI1238))).